The following is a 722-amino-acid chain: Polyribonucleotide nucleotidyltransferase (722 aa).

The Mg(2+) site is built by D495 and D501. The 60-residue stretch at 562–621 folds into the KH domain; sequence PRLLSFRIDPELIGTVIGPGGRTIKGITERTNTKIDIEDGGIVTIASHDGVAAEEAQKII. The S1 motif domain occupies 631 to 699; it reads GEIFTGSITR…NRGRINLTLR (69 aa). Polar residues predominate over residues 701-711; sequence VSQNNNDMNYP. Residues 701–722 are disordered; the sequence is VSQNNNDMNYPQPTPTPVAPLN. Over residues 712–722 the composition is skewed to pro residues; that stretch reads QPTPTPVAPLN.

It belongs to the polyribonucleotide nucleotidyltransferase family. Mg(2+) serves as cofactor.

It localises to the cytoplasm. It catalyses the reaction RNA(n+1) + phosphate = RNA(n) + a ribonucleoside 5'-diphosphate. Functionally, involved in mRNA degradation. Catalyzes the phosphorolysis of single-stranded polyribonucleotides processively in the 3'- to 5'-direction. The chain is Polyribonucleotide nucleotidyltransferase from Prochlorococcus marinus (strain MIT 9211).